Reading from the N-terminus, the 166-residue chain is Cyanate hydratase (166 aa).

Catalysis depends on residues R106, E109, and S132.

This sequence belongs to the cyanase family.

It catalyses the reaction cyanate + hydrogencarbonate + 3 H(+) = NH4(+) + 2 CO2. Its function is as follows. Catalyzes the reaction of cyanate with bicarbonate to produce ammonia and carbon dioxide. This Verticillium alfalfae (strain VaMs.102 / ATCC MYA-4576 / FGSC 10136) (Verticillium wilt of alfalfa) protein is Cyanate hydratase.